The following is a 421-amino-acid chain: General transcription factor IIH subunit 2 (421 aa).

Positions 1–26 are disordered; sequence MSNQRKRSNDEREEEDDEDAEGIGEW. Residues 11-24 are compositionally biased toward acidic residues; sequence EREEEDDEDAEGIG. One can recognise a VWFA domain in the interval 83-272; it reads YLYIVIDFSR…IAEFAIANLI (190 aa). The segment at 362–408 adopts an RING-type zinc-finger fold; it reads CFGCQQSLIGAGNKPVPCVTCRKCKHYFCLDCDIYIHESLHNCPGCE.

The protein belongs to the GTF2H2 family. Component of the 7-subunit TFIIH core complex composed of XPB, XPD, TFB1/GTF2H1, GTF2H2/P44, TFB4/GTF2H3, TFB2/GTF2H4 and TFB5/GTF2H5, which is active in NER. The core complex associates with the 3-subunit CDK-activating kinase (CAK) module composed of CYCH1/cyclin H1, CDKD and MAT1/At4g30820 to form the 10-subunit holoenzyme (holo-TFIIH) active in transcription. Interacts with XPD.

It localises to the nucleus. Its function is as follows. Component of the general transcription and DNA repair factor IIH (TFIIH) core complex, which is involved in general and transcription-coupled nucleotide excision repair (NER) of damaged DNA and, when complexed to CAK, in RNA transcription by RNA polymerase II. In NER, TFIIH acts by opening DNA around the lesion to allow the excision of the damaged oligonucleotide and its replacement by a new DNA fragment. In transcription, TFIIH has an essential role in transcription initiation. When the pre-initiation complex (PIC) has been established, TFIIH is required for promoter opening and promoter escape. Phosphorylation of the C-terminal tail (CTD) of the largest subunit of RNA polymerase II by the kinase module CAK controls the initiation of transcription. Can restore UV resistance in the NER-deficient ssl1-1 yeast mutant. This Arabidopsis thaliana (Mouse-ear cress) protein is General transcription factor IIH subunit 2.